The chain runs to 178 residues: MSRIGRLPIDVPAGVDVKIDGQAVTVKGPKGELSLTVASPIEVKLEEGQVLVTRPDDERESRSLHGLTRTLLNNNIVGVTQGYSKGLEIVGTGYRVAQKGAGVEFALGFSHPVTVEPPAGITFTVEGNNKLTVAGIDKQAVGEVAANIRKIRKPEPYKGKGVRYAGEVVRRKAGKAGK.

The protein belongs to the universal ribosomal protein uL6 family. In terms of assembly, part of the 50S ribosomal subunit.

This protein binds to the 23S rRNA, and is important in its secondary structure. It is located near the subunit interface in the base of the L7/L12 stalk, and near the tRNA binding site of the peptidyltransferase center. The protein is Large ribosomal subunit protein uL6 of Leifsonia xyli subsp. xyli (strain CTCB07).